An 833-amino-acid polypeptide reads, in one-letter code: Translation initiation factor IF-2 (833 aa).

The disordered stretch occupies residues 1-247 (MTEDVKKADG…ALQQAFTKPA (247 aa)). 2 stretches are compositionally biased toward basic and acidic residues: residues 53–99 (QKAE…EAKK) and 110–152 (VDVE…RYAE). The segment covering 153 to 166 (LSEEDAENENSEDY) has biased composition (acidic residues). Positions 187 to 203 (KENRNRGGKNKVAKAKK) are enriched in basic residues. The segment covering 204–227 (GGREDESSKTERESNRRNQKDGKM) has biased composition (basic and acidic residues). The 170-residue stretch at 333–502 (TRAPVVTIMG…LLQSEVLELT (170 aa)) folds into the tr-type G domain. A G1 region spans residues 342-349 (GHVDHGKT). 342 to 349 (GHVDHGKT) contributes to the GTP binding site. Residues 367-371 (GITQH) form a G2 region. Residues 388 to 391 (DTPG) form a G3 region. GTP contacts are provided by residues 388–392 (DTPGH) and 442–445 (NKID). The segment at 442-445 (NKID) is G4. A G5 region spans residues 478–480 (SAK).

This sequence belongs to the TRAFAC class translation factor GTPase superfamily. Classic translation factor GTPase family. IF-2 subfamily.

The protein resides in the cytoplasm. Its function is as follows. One of the essential components for the initiation of protein synthesis. Protects formylmethionyl-tRNA from spontaneous hydrolysis and promotes its binding to the 30S ribosomal subunits. Also involved in the hydrolysis of GTP during the formation of the 70S ribosomal complex. This is Translation initiation factor IF-2 (infB) from Pasteurella multocida (strain Pm70).